The following is a 463-amino-acid chain: NADH dehydrogenase [ubiquinone] iron-sulfur protein 2, mitochondrial (463 aa).

A mitochondrion-targeting transit peptide spans 1 to 33 (MAALRALCRLRGAAAQVLRPGAGVRLPIQPSRG). Lys62 carries the N6-acetyllysine modification. Arg118 is modified (symmetric dimethylarginine). [4Fe-4S] cluster is bound by residues Cys326, Cys332, and Cys347.

The protein belongs to the complex I 49 kDa subunit family. In terms of assembly, core subunit of respiratory chain NADH dehydrogenase (Complex I) which is composed of 45 different subunits. Component of the iron-sulfur (IP) fragment of the enzyme. Interacts with NDUFAF3. Interacts with NDUFAF7. Interacts with CERS2. Requires [4Fe-4S] cluster as cofactor. Dimethylation at Arg-118 by NDUFAF7 takes place after NDUFS2 assembles into the complex I, leading to stabilize the early intermediate complex.

It is found in the mitochondrion inner membrane. The catalysed reaction is a ubiquinone + NADH + 5 H(+)(in) = a ubiquinol + NAD(+) + 4 H(+)(out). Core subunit of the mitochondrial membrane respiratory chain NADH dehydrogenase (Complex I) which catalyzes electron transfer from NADH through the respiratory chain, using ubiquinone as an electron acceptor. Essential for the catalytic activity and assembly of complex I. Redox-sensitive, critical component of the oxygen-sensing pathway in the pulmonary vasculature which plays a key role in acute pulmonary oxygen-sensing and hypoxic pulmonary vasoconstriction. Plays an important role in carotid body sensing of hypoxia. Essential for glia-like neural stem and progenitor cell proliferation, differentiation and subsequent oligodendrocyte or neuronal maturation. This chain is NADH dehydrogenase [ubiquinone] iron-sulfur protein 2, mitochondrial (NDUFS2), found in Bos taurus (Bovine).